A 422-amino-acid polypeptide reads, in one-letter code: Ferrochelatase, mitochondrial (422 aa).

The transit peptide at 1–53 (MLSASANMAAALRAAGALLREPLVHGSSRACQPWRCQSGAAVAATTEKVHHAK) directs the protein to the mitochondrion. K56 is modified (N6-acetyllysine). Positions 114, 122, and 129 each coordinate protoporphyrin IX. K137 carries the N6-succinyllysine modification. Residue C195 coordinates [2Fe-2S] cluster. Residue H229 is part of the active site. K289 is modified (N6-acetyllysine; alternate). K289 is subject to N6-succinyllysine; alternate. The active site involves D382. Positions 402, 405, and 410 each coordinate [2Fe-2S] cluster. Position 414 is an N6-acetyllysine; alternate (K414). Position 414 is an N6-succinyllysine; alternate (K414).

This sequence belongs to the ferrochelatase family. As to quaternary structure, homodimer. Homotetramer. Interaction with PGRMC1; the interaction results in decreased FECH activity. Interacts with ABCB10 and SLC25A37; this interaction forms an oligomeric complex. Forms a complex with ABCB7 and ABCB10, where a dimeric FECH bridges ABCB7 and ABCB10 homodimers; this complex may be required for cellular iron homeostasis, mitochondrial function and heme biosynthesis. Interacts with ABCB7 and ABCB10. It depends on [2Fe-2S] cluster as a cofactor. As to expression, erythroid and hepatic cells.

The protein resides in the mitochondrion inner membrane. It carries out the reaction heme b + 2 H(+) = protoporphyrin IX + Fe(2+). It participates in porphyrin-containing compound metabolism; protoheme biosynthesis; protoheme from protoporphyrin-IX: step 1/1. Catalyzes the ferrous insertion into protoporphyrin IX. In Mus musculus (Mouse), this protein is Ferrochelatase, mitochondrial.